Here is a 445-residue protein sequence, read N- to C-terminus: tRNA(Ile)-lysidine synthase (445 aa).

33–38 contacts ATP; it reads SGGLDS.

Belongs to the tRNA(Ile)-lysidine synthase family.

It localises to the cytoplasm. It carries out the reaction cytidine(34) in tRNA(Ile2) + L-lysine + ATP = lysidine(34) in tRNA(Ile2) + AMP + diphosphate + H(+). Its function is as follows. Ligates lysine onto the cytidine present at position 34 of the AUA codon-specific tRNA(Ile) that contains the anticodon CAU, in an ATP-dependent manner. Cytidine is converted to lysidine, thus changing the amino acid specificity of the tRNA from methionine to isoleucine. The chain is tRNA(Ile)-lysidine synthase from Pseudomonas syringae pv. tomato (strain ATCC BAA-871 / DC3000).